Reading from the N-terminus, the 1166-residue chain is Myosin-1 (1166 aa).

Positions 1–13 (MSQKVTPFMQSLK) are enriched in polar residues. The segment at 1–71 (MSQKVTPFMQ…AGDSEDSPYS (71 aa)) is disordered. Ser14 carries the phosphoserine modification. A compositionally biased stretch (polar residues) spans 32–45 (NSSGASVRLTNSNV). Residues 112–161 (KKILQSWIQLPNGNWELGKILSTSGEESVISLPEGKVIKVISETLVPANP) form the Myosin N-terminal SH3-like domain. Positions 165-837 (DGVDDLMQLS…QIGVLEDTRN (673 aa)) constitute a Myosin motor domain. ATP is bound by residues 256-263 (GESGAGKT) and 304-312 (NDNSSRFGK). 2 actin-binding regions span residues 589-623 (LFEK…KQHL) and 717-739 (LFQL…KPNN). 4 consecutive IQ domains span residues 839-868 (TLHG…GISI), 862-891 (LKRG…RHKA), 888-917 (RHKA…ASVV), and 911-940 (IADA…LKSG). The stretch at 955 to 1005 (SVLSELQRRVLKAEAALREKEEENDILQQRLQQYENRWSEYETKMKSMEEI) forms a coiled coil. Residues 1030 to 1065 (ARNSDASVNASDATDWDSSSNQFRSQTSNGVGSRLQ) are disordered. Residues 1032-1060 (NSDASVNASDATDWDSSSNQFRSQTSNGV) are compositionally biased toward polar residues.

This sequence belongs to the TRAFAC class myosin-kinesin ATPase superfamily. Myosin family. Plant myosin class VIII subfamily. In terms of assembly, homodimer.

The protein resides in the cell junction. The protein localises to the plasmodesma. It localises to the cytoplasm. It is found in the cytoskeleton. Its subcellular location is the phragmoplast. The protein resides in the endosome. The protein localises to the endoplasmic reticulum. Its function is as follows. Myosin heavy chain that is required for the cell cycle-regulated transport of various organelles and proteins for their segregation. Functions by binding with its tail domain to receptor proteins on organelles and exerting force with its N-terminal motor domain against actin filaments, thereby transporting its cargo along polarized actin cables. Involved in endocytosis via its action in endosomal trafficking. In Arabidopsis thaliana (Mouse-ear cress), this protein is Myosin-1 (VIII-1).